We begin with the raw amino-acid sequence, 296 residues long: Phosphatidylserine decarboxylase proenzyme (296 aa).

Active-site charge relay system; for autoendoproteolytic cleavage activity residues include Asp92, His149, and Ser251. Ser251 functions as the Schiff-base intermediate with substrate; via pyruvic acid; for decarboxylase activity in the catalytic mechanism. Ser251 bears the Pyruvic acid (Ser); by autocatalysis mark.

It belongs to the phosphatidylserine decarboxylase family. PSD-B subfamily. Prokaryotic type I sub-subfamily. In terms of assembly, heterodimer of a large membrane-associated beta subunit and a small pyruvoyl-containing alpha subunit. The cofactor is pyruvate. Is synthesized initially as an inactive proenzyme. Formation of the active enzyme involves a self-maturation process in which the active site pyruvoyl group is generated from an internal serine residue via an autocatalytic post-translational modification. Two non-identical subunits are generated from the proenzyme in this reaction, and the pyruvate is formed at the N-terminus of the alpha chain, which is derived from the carboxyl end of the proenzyme. The autoendoproteolytic cleavage occurs by a canonical serine protease mechanism, in which the side chain hydroxyl group of the serine supplies its oxygen atom to form the C-terminus of the beta chain, while the remainder of the serine residue undergoes an oxidative deamination to produce ammonia and the pyruvoyl prosthetic group on the alpha chain. During this reaction, the Ser that is part of the protease active site of the proenzyme becomes the pyruvoyl prosthetic group, which constitutes an essential element of the active site of the mature decarboxylase.

Its subcellular location is the cell membrane. The catalysed reaction is a 1,2-diacyl-sn-glycero-3-phospho-L-serine + H(+) = a 1,2-diacyl-sn-glycero-3-phosphoethanolamine + CO2. The protein operates within phospholipid metabolism; phosphatidylethanolamine biosynthesis; phosphatidylethanolamine from CDP-diacylglycerol: step 2/2. Catalyzes the formation of phosphatidylethanolamine (PtdEtn) from phosphatidylserine (PtdSer). This chain is Phosphatidylserine decarboxylase proenzyme, found in Hahella chejuensis (strain KCTC 2396).